We begin with the raw amino-acid sequence, 185 residues long: Elongation factor P (185 aa).

The protein belongs to the elongation factor P family.

Its subcellular location is the cytoplasm. Its pathway is protein biosynthesis; polypeptide chain elongation. Its function is as follows. Involved in peptide bond synthesis. Stimulates efficient translation and peptide-bond synthesis on native or reconstituted 70S ribosomes in vitro. Probably functions indirectly by altering the affinity of the ribosome for aminoacyl-tRNA, thus increasing their reactivity as acceptors for peptidyl transferase. This Herpetosiphon aurantiacus (strain ATCC 23779 / DSM 785 / 114-95) protein is Elongation factor P.